Here is a 386-residue protein sequence, read N- to C-terminus: Patatin-2-Kuras 3 (386 aa).

Residues 1–23 (MATTKSVLVLFFMILATTSSTCA) form the signal peptide. The PNPLA domain maps to 32 to 229 (LSIDGGGIKG…TVGDPALLSL (198 aa)). The GXGXXG signature appears at 36-41 (GGGIKG). A GXSXG motif is present at residues 75–79 (GTSTG). Residue Ser77 is the Nucleophile of the active site. N-linked (GlcNAc...) asparagine glycosylation occurs at Asn115. Residue Asp215 is the Proton acceptor of the active site. The DGA/G motif lies at 215–217 (DGA). A coiled-coil region spans residues 321-384 (ENALTGTTTE…DRKKLRANKA (64 aa)).

This sequence belongs to the patatin family. Tuber.

The protein resides in the vacuole. Its function is as follows. Probable lipolytic acyl hydrolase (LAH), an activity which is thought to be involved in the response of tubers to pathogens. The polypeptide is Patatin-2-Kuras 3 (pat2-k3) (Solanum tuberosum (Potato)).